A 200-amino-acid polypeptide reads, in one-letter code: NADH-quinone oxidoreductase subunit B 2 (200 aa).

Residues Cys-79, Cys-80, Cys-144, and Cys-174 each coordinate [4Fe-4S] cluster.

This sequence belongs to the complex I 20 kDa subunit family. As to quaternary structure, NDH-1 is composed of 14 different subunits. Subunits NuoB, C, D, E, F, and G constitute the peripheral sector of the complex. It depends on [4Fe-4S] cluster as a cofactor.

Its subcellular location is the cell inner membrane. It carries out the reaction a quinone + NADH + 5 H(+)(in) = a quinol + NAD(+) + 4 H(+)(out). Its function is as follows. NDH-1 shuttles electrons from NADH, via FMN and iron-sulfur (Fe-S) centers, to quinones in the respiratory chain. The immediate electron acceptor for the enzyme in this species is believed to be ubiquinone. Couples the redox reaction to proton translocation (for every two electrons transferred, four hydrogen ions are translocated across the cytoplasmic membrane), and thus conserves the redox energy in a proton gradient. This is NADH-quinone oxidoreductase subunit B 2 from Rhodopseudomonas palustris (strain BisA53).